The following is a 439-amino-acid chain: Trigger factor (439 aa).

In terms of domain architecture, PPIase FKBP-type spans 163 to 248; it reads GDRVTIDYRG…LNKLEAPKLP (86 aa).

Belongs to the FKBP-type PPIase family. Tig subfamily.

It is found in the cytoplasm. It carries out the reaction [protein]-peptidylproline (omega=180) = [protein]-peptidylproline (omega=0). Functionally, involved in protein export. Acts as a chaperone by maintaining the newly synthesized protein in an open conformation. Functions as a peptidyl-prolyl cis-trans isomerase. The polypeptide is Trigger factor (Nitrosomonas europaea (strain ATCC 19718 / CIP 103999 / KCTC 2705 / NBRC 14298)).